Here is a 300-residue protein sequence, read N- to C-terminus: Ribosomal protein L11 methyltransferase (300 aa).

Residues Thr-144, Gly-165, Asp-187, and Asn-235 each coordinate S-adenosyl-L-methionine.

It belongs to the methyltransferase superfamily. PrmA family.

The protein localises to the cytoplasm. The enzyme catalyses L-lysyl-[protein] + 3 S-adenosyl-L-methionine = N(6),N(6),N(6)-trimethyl-L-lysyl-[protein] + 3 S-adenosyl-L-homocysteine + 3 H(+). In terms of biological role, methylates ribosomal protein L11. The polypeptide is Ribosomal protein L11 methyltransferase (Prochlorococcus marinus (strain MIT 9515)).